A 119-amino-acid polypeptide reads, in one-letter code: Large ribosomal subunit protein bL20 (119 aa).

This sequence belongs to the bacterial ribosomal protein bL20 family.

In terms of biological role, binds directly to 23S ribosomal RNA and is necessary for the in vitro assembly process of the 50S ribosomal subunit. It is not involved in the protein synthesizing functions of that subunit. The chain is Large ribosomal subunit protein bL20 from Rhodopseudomonas palustris (strain BisA53).